Consider the following 297-residue polypeptide: Vacuolar protein sorting-associated protein 26C (297 aa).

Belongs to the VPS26 family. In terms of assembly, component of the commander complex that is essential for endosomal recycling of transmembrane cargos; the commander complex is composed of the CCC subcomplex and the retriever subcomplex. Component of the heterotrimeric retriever complex consisting of VPS26C, VPS29 and VPS35L; within the complex interacts with VPS35L. Interacts with SNX17 (via C-terminus); the interaction is direct and associates SNX17 with the retriever complex. Interacts with SNX31; the interaction is direct.

Its subcellular location is the endosome. Component of the commander complex that is essential for endosomal recycling of transmembrane cargos; the commander complex is composed of the CCC subcomplex and the retriever subcomplex. Component of the retriever complex, which is a heterotrimeric complex related to retromer cargo-selective complex (CSC) and essential for retromer-independent retrieval and recycling of numerous cargos such as integrin alpha-5/beta-1 (ITGA5:ITGB1). The recruitment of the retriever complex to the endosomal membrane involves CCC and WASH complexes. In the endosomes, drives the retriever and recycling of NxxY-motif-containing cargo proteins by coupling to SNX17, a cargo essential for the homeostatic maintenance of numerous cell surface proteins associated with processes that include cell migration, cell adhesion, nutrient supply and cell signaling. This chain is Vacuolar protein sorting-associated protein 26C (VPS26C), found in Pongo abelii (Sumatran orangutan).